The sequence spans 716 residues: Phosphoribosylformylglycinamidine synthase subunit PurL (716 aa).

Histidine 33 is a catalytic residue. Tyrosine 36 is an ATP binding site. Glutamate 77 provides a ligand contact to Mg(2+). Substrate-binding positions include 78 to 81 (SHNH) and arginine 100. The active-site Proton acceptor is the histidine 79. A Mg(2+)-binding site is contributed by aspartate 101. Residue glutamine 225 coordinates substrate. Aspartate 253 serves as a coordination point for Mg(2+). 297-299 (ESQ) is a binding site for substrate. Residues asparagine 475 and glycine 512 each contribute to the ATP site. Asparagine 513 provides a ligand contact to Mg(2+). Substrate is bound at residue serine 515.

Belongs to the FGAMS family. In terms of assembly, monomer. Part of the FGAM synthase complex composed of 1 PurL, 1 PurQ and 2 PurS subunits.

It localises to the cytoplasm. The catalysed reaction is N(2)-formyl-N(1)-(5-phospho-beta-D-ribosyl)glycinamide + L-glutamine + ATP + H2O = 2-formamido-N(1)-(5-O-phospho-beta-D-ribosyl)acetamidine + L-glutamate + ADP + phosphate + H(+). Its pathway is purine metabolism; IMP biosynthesis via de novo pathway; 5-amino-1-(5-phospho-D-ribosyl)imidazole from N(2)-formyl-N(1)-(5-phospho-D-ribosyl)glycinamide: step 1/2. Part of the phosphoribosylformylglycinamidine synthase complex involved in the purines biosynthetic pathway. Catalyzes the ATP-dependent conversion of formylglycinamide ribonucleotide (FGAR) and glutamine to yield formylglycinamidine ribonucleotide (FGAM) and glutamate. The FGAM synthase complex is composed of three subunits. PurQ produces an ammonia molecule by converting glutamine to glutamate. PurL transfers the ammonia molecule to FGAR to form FGAM in an ATP-dependent manner. PurS interacts with PurQ and PurL and is thought to assist in the transfer of the ammonia molecule from PurQ to PurL. The sequence is that of Phosphoribosylformylglycinamidine synthase subunit PurL from Methanosarcina mazei (strain ATCC BAA-159 / DSM 3647 / Goe1 / Go1 / JCM 11833 / OCM 88) (Methanosarcina frisia).